The primary structure comprises 114 residues: FK506-binding protein 1 (114 aa).

One can recognise a PPIase FKBP-type domain in the interval Gly-26–Asn-114.

The protein belongs to the FKBP-type PPIase family. FKBP1 subfamily.

The protein localises to the cytoplasm. The enzyme catalyses [protein]-peptidylproline (omega=180) = [protein]-peptidylproline (omega=0). With respect to regulation, inhibited by both FK506 and rapamycin. Its function is as follows. PPIases accelerate the folding of proteins. It catalyzes the cis-trans isomerization of proline imidic peptide bonds in oligopeptides. This chain is FK506-binding protein 1 (FPR1), found in Kluyveromyces lactis (strain ATCC 8585 / CBS 2359 / DSM 70799 / NBRC 1267 / NRRL Y-1140 / WM37) (Yeast).